The chain runs to 205 residues: Small ribosomal subunit protein uS4 (205 aa).

Residues 94–157 enclose the S4 RNA-binding domain; the sequence is SRLDTVVYRM…KQIALIQESI (64 aa).

This sequence belongs to the universal ribosomal protein uS4 family. As to quaternary structure, part of the 30S ribosomal subunit. Contacts protein S5. The interaction surface between S4 and S5 is involved in control of translational fidelity.

Functionally, one of the primary rRNA binding proteins, it binds directly to 16S rRNA where it nucleates assembly of the body of the 30S subunit. In terms of biological role, with S5 and S12 plays an important role in translational accuracy. This chain is Small ribosomal subunit protein uS4, found in Rickettsia canadensis (strain McKiel).